Consider the following 185-residue polypeptide: Ribosome-recycling factor (185 aa).

This sequence belongs to the RRF family.

The protein resides in the cytoplasm. Its function is as follows. Responsible for the release of ribosomes from messenger RNA at the termination of protein biosynthesis. May increase the efficiency of translation by recycling ribosomes from one round of translation to another. The polypeptide is Ribosome-recycling factor (Francisella philomiragia subsp. philomiragia (strain ATCC 25017 / CCUG 19701 / FSC 153 / O#319-036)).